Consider the following 328-residue polypeptide: Putative potassium channel protein YugO (328 aa).

3 helical membrane passes run 19-39 (IGVI…ILEP), 42-62 (FTSV…VGYG), and 73-93 (AAGI…FATL). Residues 114-238 (RDHIILIGWN…ERAGANQIIG (125 aa)) enclose the RCK N-terminal domain.

The protein localises to the cell membrane. The polypeptide is Putative potassium channel protein YugO (yugO) (Bacillus subtilis (strain 168)).